The sequence spans 430 residues: MAGVVVVGAQWGDEGKGKIVDWLSSRADVVVRFQGGHNAGHTLVIDGKVFKLALLPSGLVRGGKLSVIGNGVVVDPWHMLTEIEGIQAQGIEVSPESLVLADNASLILPWHKDIDAAREGALGAAQIGTTKRGIGPAYEDRVGRRAIRVADLADPAALDLKIERLLAHHRPLRAGLDLPEPDGAALKAALLEIAPQVLAYAQPVWKLLDEKVRRGSRILFEGAQGVMLDVDHGTYPFVTSSSVVAGNASAGSGVGPGAISYVLGLAKAYTTRVGAGPFPTEQDNDIGKRLGTVGHEFGTNTGRARRCGWFDSVMVRQACATSGVTGLALTKLDVLDGFEEIKICTAYKLNGKTIDYFPAGLTDQAAVEPVYETLKGWSGSTRGARSWTDLPPEAVVYVRRLEELVGKPCALVSTSPEREDVILMRDPFEG.

GTP contacts are provided by residues 12-18 and 40-42; these read GDEGKGK and GHT. Asp13 serves as the catalytic Proton acceptor. Mg(2+) contacts are provided by Asp13 and Gly40. Residues 13–16, 38–41, Thr130, Arg144, Gln224, Thr239, and Arg303 contribute to the IMP site; these read DEGK and NAGH. His41 functions as the Proton donor in the catalytic mechanism. 299-305 serves as a coordination point for substrate; it reads TNTGRAR. GTP-binding positions include Arg305, 331–333, and 413–415; these read KLD and STS.

This sequence belongs to the adenylosuccinate synthetase family. Homodimer. Requires Mg(2+) as cofactor.

The protein resides in the cytoplasm. The enzyme catalyses IMP + L-aspartate + GTP = N(6)-(1,2-dicarboxyethyl)-AMP + GDP + phosphate + 2 H(+). It participates in purine metabolism; AMP biosynthesis via de novo pathway; AMP from IMP: step 1/2. Functionally, plays an important role in the de novo pathway of purine nucleotide biosynthesis. Catalyzes the first committed step in the biosynthesis of AMP from IMP. The sequence is that of Adenylosuccinate synthetase from Hyphomonas neptunium (strain ATCC 15444).